Consider the following 1213-residue polypeptide: A disintegrin and metalloproteinase with thrombospondin motifs 19 (1213 aa).

An N-terminal signal peptide occupies residues 1–27 (MGKNREMRLTHICCCCLLYQLGFLSNG). Residues 28–322 (IVSELQFAPD…KIAESGRGKR (295 aa)) constitute a propeptide that is removed on maturation. Disordered regions lie at residues 49–161 (WRRE…PPPA) and 192–215 (FLAP…AASA). Residues 52–71 (EPVDPAGGSGGSADPGWVRG) show a composition bias toward gly residues. Positions 110-119 (RPPPPSEGEE) are enriched in acidic residues. The segment covering 120–139 (DEELESQELPRGSSGAAALS) has biased composition (low complexity). The segment covering 140 to 155 (PGAPASWQPPPPPQPP) has biased composition (pro residues). A glycan (N-linked (GlcNAc...) asparagine) is linked at asparagine 266. The short motif at 298 to 305 (HYCGIISD) is the Cysteine switch element. Position 300 (cysteine 300) interacts with Zn(2+). In terms of domain architecture, Peptidase M12B spans 331 to 551 (YNIETVVVAD…KASNCLLQTN (221 aa)). Disulfide bonds link cysteine 407/cysteine 472, cysteine 447/cysteine 454, cysteine 466/cysteine 546, cysteine 505/cysteine 530, cysteine 575/cysteine 599, cysteine 586/cysteine 607, cysteine 594/cysteine 626, cysteine 620/cysteine 631, cysteine 651/cysteine 686, cysteine 655/cysteine 691, and cysteine 666/cysteine 676. Residue histidine 488 coordinates Zn(2+). Glutamate 489 is a catalytic residue. Residues histidine 492 and histidine 498 each contribute to the Zn(2+) site. One can recognise a Disintegrin domain in the interval 552 to 639 (PQSVNSVMVP…ECTSRTSAPE (88 aa)). Residues 640 to 692 (HLAGEWSLWSPCSRTCSAGISSRERKCPGLDSEARDCNGPRKQYRICENPPCP) form the TSP type-1 1 domain. The interval 797-920 (IIKGDFNHTR…PENQSSKAPE (124 aa)) is spacer. N-linked (GlcNAc...) asparagine glycans are attached at residues asparagine 803, asparagine 913, asparagine 955, and asparagine 1015. TSP type-1 domains follow at residues 921 to 981 (PLFM…NEQP), 982 to 1043 (CQTR…QDCM), 1045 to 1089 (VWEA…EDCE), and 1093 to 1150 (KCYV…QPCN). Cystine bridges form between cysteine 994–cysteine 1037, cysteine 998–cysteine 1042, and cysteine 1009–cysteine 1026. The region spanning 1166-1205 (LTFKCLGDQWPVYCRVIREKNLCQDMRWYQRCCETCRDFY) is the PLAC domain.

It depends on Zn(2+) as a cofactor. In terms of processing, the precursor is cleaved by a furin endopeptidase. Post-translationally, glycosylated. Can be O-fucosylated by POFUT2 on a serine or a threonine residue found within the consensus sequence C1-X(2)-(S/T)-C2-G of the TSP type-1 repeat domains where C1 and C2 are the first and second cysteine residue of the repeat, respectively. Fucosylated repeats can then be further glycosylated by the addition of a beta-1,3-glucose residue by the glucosyltransferase, B3GALTL. Fucosylation mediates the efficient secretion of ADAMTS family members. Can also be C-glycosylated with one or two mannose molecules on tryptophan residues within the consensus sequence W-X-X-W of the TPRs, and N-glycosylated. These other glycosylations can also facilitate secretion. In terms of tissue distribution, expressed in fetal lung, but not in any adult tissues examined. Expression was detected in an osteosarcoma cDNA library.

The protein localises to the secreted. Its subcellular location is the extracellular space. It is found in the extracellular matrix. This chain is A disintegrin and metalloproteinase with thrombospondin motifs 19 (ADAMTS19), found in Homo sapiens (Human).